The sequence spans 468 residues: Zinc finger CCCH domain-containing protein 32 (468 aa).

The disordered stretch occupies residues 1–25 (MYARNPPLNGSQSAQAPDWTPADAD). C3H1-type zinc fingers lie at residues 45–73 (RPGA…HPRD), 90–118 (RFGE…HPKN), 136–164 (REGD…HPQP), 289–317 (RPGE…HPRD), and 335–363 (RPGV…HPMG).

Its subcellular location is the nucleus. This chain is Zinc finger CCCH domain-containing protein 32, found in Arabidopsis thaliana (Mouse-ear cress).